We begin with the raw amino-acid sequence, 698 residues long: Polyribonucleotide nucleotidyltransferase (698 aa).

2 residues coordinate Mg(2+): aspartate 485 and aspartate 491. A KH domain is found at 552–611; the sequence is PRITTIKINPEKIRDVIGKGGAVIRALTEETGTTIELDDDGTVKIASSNGEATKEAIRRI. Residues 621-689 enclose the S1 motif domain; it reads GRVYNGKVIR…RQGRVRLSIK (69 aa).

Belongs to the polyribonucleotide nucleotidyltransferase family. As to quaternary structure, component of the RNA degradosome, which is a multiprotein complex involved in RNA processing and mRNA degradation. The cofactor is Mg(2+).

Its subcellular location is the cytoplasm. The catalysed reaction is RNA(n+1) + phosphate = RNA(n) + a ribonucleoside 5'-diphosphate. Involved in mRNA degradation. Catalyzes the phosphorolysis of single-stranded polyribonucleotides processively in the 3'- to 5'-direction. This chain is Polyribonucleotide nucleotidyltransferase, found in Shewanella denitrificans (strain OS217 / ATCC BAA-1090 / DSM 15013).